Reading from the N-terminus, the 130-residue chain is MTRTSVLADALNAINNAEKTGKRQVLIRPSSKVIIKFLQVMQKHGYIGEFEYIDDHRSGKIVVQLNGRLNKCGVISPRFNVKISDVEKWTANLLPARQFGYVILTTSAGIMDHEEAHRKHVSGKILGFVY.

The protein belongs to the universal ribosomal protein uS8 family.

This chain is Small ribosomal subunit protein uS8 (RPS22), found in Kluyveromyces marxianus (Yeast).